The chain runs to 492 residues: 2-succinylbenzoate--CoA ligase (492 aa).

Belongs to the ATP-dependent AMP-binding enzyme family. MenE subfamily.

The enzyme catalyses 2-succinylbenzoate + ATP + CoA = 2-succinylbenzoyl-CoA + AMP + diphosphate. Its pathway is quinol/quinone metabolism; 1,4-dihydroxy-2-naphthoate biosynthesis; 1,4-dihydroxy-2-naphthoate from chorismate: step 5/7. The protein operates within quinol/quinone metabolism; menaquinone biosynthesis. Functionally, converts 2-succinylbenzoate (OSB) to 2-succinylbenzoyl-CoA (OSB-CoA). This is 2-succinylbenzoate--CoA ligase from Geobacillus sp. (strain WCH70).